The following is a 633-amino-acid chain: Chaperone protein DnaK (633 aa).

Thr198 carries the phosphothreonine; by autocatalysis modification.

Belongs to the heat shock protein 70 family.

In terms of biological role, acts as a chaperone. This is Chaperone protein DnaK from Rhodopseudomonas palustris (strain HaA2).